A 179-amino-acid chain; its full sequence is Large ribosomal subunit protein uL5 (179 aa).

This sequence belongs to the universal ribosomal protein uL5 family. In terms of assembly, part of the 50S ribosomal subunit; part of the 5S rRNA/L5/L18/L25 subcomplex. Contacts the 5S rRNA and the P site tRNA. Forms a bridge to the 30S subunit in the 70S ribosome.

Its function is as follows. This is one of the proteins that bind and probably mediate the attachment of the 5S RNA into the large ribosomal subunit, where it forms part of the central protuberance. In the 70S ribosome it contacts protein S13 of the 30S subunit (bridge B1b), connecting the 2 subunits; this bridge is implicated in subunit movement. Contacts the P site tRNA; the 5S rRNA and some of its associated proteins might help stabilize positioning of ribosome-bound tRNAs. In Prochlorococcus marinus (strain MIT 9312), this protein is Large ribosomal subunit protein uL5.